Reading from the N-terminus, the 320-residue chain is Ferrochelatase (320 aa).

Fe cation is bound by residues histidine 194 and glutamate 275.

This sequence belongs to the ferrochelatase family.

It localises to the cytoplasm. It carries out the reaction heme b + 2 H(+) = protoporphyrin IX + Fe(2+). Its pathway is porphyrin-containing compound metabolism; protoheme biosynthesis; protoheme from protoporphyrin-IX: step 1/1. In terms of biological role, catalyzes the ferrous insertion into protoporphyrin IX. The protein is Ferrochelatase of Vibrio parahaemolyticus serotype O3:K6 (strain RIMD 2210633).